Reading from the N-terminus, the 421-residue chain is Imidazolonepropionase (421 aa).

Residues histidine 81 and histidine 83 each contribute to the Fe(3+) site. 2 residues coordinate Zn(2+): histidine 81 and histidine 83. Arginine 90, tyrosine 153, and histidine 186 together coordinate 4-imidazolone-5-propanoate. An N-formimidoyl-L-glutamate-binding site is contributed by tyrosine 153. Histidine 251 is a binding site for Fe(3+). Histidine 251 is a Zn(2+) binding site. Residue glutamate 254 coordinates 4-imidazolone-5-propanoate. Aspartate 326 is a Fe(3+) binding site. A Zn(2+)-binding site is contributed by aspartate 326. Residues asparagine 328 and glycine 330 each contribute to the N-formimidoyl-L-glutamate site. Serine 331 contributes to the 4-imidazolone-5-propanoate binding site.

The protein belongs to the metallo-dependent hydrolases superfamily. HutI family. Zn(2+) is required as a cofactor. The cofactor is Fe(3+).

It is found in the cytoplasm. It carries out the reaction 4-imidazolone-5-propanoate + H2O = N-formimidoyl-L-glutamate. It participates in amino-acid degradation; L-histidine degradation into L-glutamate; N-formimidoyl-L-glutamate from L-histidine: step 3/3. Its function is as follows. Catalyzes the hydrolytic cleavage of the carbon-nitrogen bond in imidazolone-5-propanoate to yield N-formimidoyl-L-glutamate. It is the third step in the universal histidine degradation pathway. The polypeptide is Imidazolonepropionase (Streptococcus pyogenes serotype M4 (strain MGAS10750)).